Here is a 131-residue protein sequence, read N- to C-terminus: Holo-[acyl-carrier-protein] synthase (131 aa).

Residues D8 and E59 each contribute to the Mg(2+) site.

It belongs to the P-Pant transferase superfamily. AcpS family. It depends on Mg(2+) as a cofactor.

It is found in the cytoplasm. The catalysed reaction is apo-[ACP] + CoA = holo-[ACP] + adenosine 3',5'-bisphosphate + H(+). Functionally, transfers the 4'-phosphopantetheine moiety from coenzyme A to a Ser of acyl-carrier-protein. The sequence is that of Holo-[acyl-carrier-protein] synthase from Rickettsia rickettsii (strain Sheila Smith).